Reading from the N-terminus, the 739-residue chain is Vascular cell adhesion protein 1 (739 aa).

The first 24 residues, 1–24 (MPGKMVVILGASNILWIMFAASQA), serve as a signal peptide directing secretion. Ig-like C2-type domains are found at residues 25–105 (FKIE…RKLE), 109–212 (QVEI…TVRQ), 223–309 (PKNT…LIVQ), 312–399 (PFTV…IQVE), 408–506 (EIEM…QTLY), 511–595 (PRDT…VELI), and 600–684 (PKDI…LTLD). Residues 25–698 (FKIETTPESR…ENNKDYFSPE (674 aa)) lie on the Extracellular side of the membrane. 5 cysteine pairs are disulfide-bonded: Cys-47–Cys-95, Cys-52–Cys-99, Cys-137–Cys-195, Cys-246–Cys-291, and Cys-335–Cys-383. N-linked (GlcNAc...) asparagine glycosylation is found at Asn-273, Asn-365, Asn-417, Asn-463, Asn-531, and Asn-561. Cys-534 and Cys-579 form a disulfide bridge. A helical transmembrane segment spans residues 699 to 720 (LLVLYFASSLIIPAIGMIIYFA). The Cytoplasmic portion of the chain corresponds to 721-739 (RKANMKGSYSLVEAQKSKV).

Post-translationally, cleaved by the metalloproteinase ADAM17 to generate the soluble form. In terms of processing, sialoglycoprotein. Ubiquitinated by TRIM65 via 'Lys-48'-linked ubiquitination; leading to proteasomal degradation. As to expression, expressed on inflamed vascular endothelium, as well as on macrophage-like and dendritic cell types in both normal and inflamed tissue.

The protein localises to the cell membrane. It is found in the secreted. Cell adhesion glycoprotein predominantly expressed on the surface of endothelial cells that plays an important role in immune surveillance and inflammation. Acts as a major regulator of leukocyte adhesion to the endothelium through interaction with different types of integrins. During inflammatory responses, binds ligands on the surface of activated endothelial cells to initiate the activation of calcium channels and the plasma membrane-associated small GTPase RAC1 leading to leukocyte transendothelial migration. Also serves as a quality-control checkpoint for entry into bone marrow by providing a 'don't-eat-me' stamping in the context of major histocompatibility complex (MHC) class-I presentation. This is Vascular cell adhesion protein 1 (VCAM1) from Homo sapiens (Human).